A 474-amino-acid chain; its full sequence is Glutamate--tRNA ligase (474 aa).

The short motif at 11-21 (PSPTGFLHIGG) is the 'HIGH' region element. The 'KMSKS' region signature appears at 240-244 (KLSKR). Residue lysine 243 coordinates ATP.

It belongs to the class-I aminoacyl-tRNA synthetase family. Glutamate--tRNA ligase type 1 subfamily. In terms of assembly, monomer.

It is found in the cytoplasm. It catalyses the reaction tRNA(Glu) + L-glutamate + ATP = L-glutamyl-tRNA(Glu) + AMP + diphosphate. Functionally, catalyzes the attachment of glutamate to tRNA(Glu) in a two-step reaction: glutamate is first activated by ATP to form Glu-AMP and then transferred to the acceptor end of tRNA(Glu). The sequence is that of Glutamate--tRNA ligase from Nitrobacter hamburgensis (strain DSM 10229 / NCIMB 13809 / X14).